A 50-amino-acid chain; its full sequence is Insulin-1 (50 aa).

Disulfide bonds link C7/C36, C19/C49, and C35/C40.

This sequence belongs to the insulin family. In terms of assembly, heterodimer of a B chain and an A chain linked by two disulfide bonds.

The protein localises to the secreted. In terms of biological role, insulin decreases blood glucose concentration. It increases cell permeability to monosaccharides, amino acids and fatty acids. It accelerates glycolysis, the pentose phosphate cycle, and glycogen synthesis in liver. In Thunnus orientalis (North Pacific bluefin tuna), this protein is Insulin-1.